Reading from the N-terminus, the 441-residue chain is MKLRSTALVKGFRQSAPYVNAHSGKTVVIMLGGEAIADPNFANIVNDIALLNSLGLQIVVVYGARPQISHLLTSQGYTTPYHKGIRVTDARALELVKQAAGQLQLDITARFSMGLNNTPMAGAQINVISGNFIIAQPLGIDDGIDYYHTGRIRRIDIDGIQRQLNQHSIVLLGPVASSVTGECFNLTSEEVATQLAIRLKADKLIGFCSEQGVIDLDGEVASEMLPNEAETALQRLIEAQEDDCGTARFLRGAVSACRAGVPRSHLISYKEDGALIQELFSLDGIGTQIVMASAEKVRGAGIDDIGGILDLIYPLEQEGILVRRSREQLEQEIEQFTIIERDGLIIACAALYPFPDEKIAEMACVAVHPDFRDGDRGVILLNRLRQQAKEQRLKHVFVLTTRSVHWFLEQGFIESDVEQLPMAKKALYNFQRRSKILVLAV.

One can recognise an N-acetyltransferase domain in the interval 295–434 (EKVRGAGIDD…KALYNFQRRS (140 aa)).

This sequence belongs to the acetyltransferase family. ArgA subfamily.

The protein localises to the cytoplasm. It catalyses the reaction L-glutamate + acetyl-CoA = N-acetyl-L-glutamate + CoA + H(+). The protein operates within amino-acid biosynthesis; L-arginine biosynthesis; N(2)-acetyl-L-ornithine from L-glutamate: step 1/4. The chain is Amino-acid acetyltransferase from Photobacterium profundum (strain SS9).